The chain runs to 438 residues: Transmembrane protein 184C (438 aa).

Helical transmembrane passes span 17–37, 48–68, 86–106, 179–199, 212–232, 254–274, and 287–307; these read LVAVIYLVSIVVAVPLCVWEL, AWFIAGIFLLLTIPISLWVIL, ILWMVPIYSLDSWIALKYPGI, YTVVRPFTTIVALICELLGIY, YLVIINNMSQLFAMYCLLLFY, VVFVSFWQAVVIALLVKVGVI, and AVATGLQDFIICIEMFLAAIA. The tract at residues 355-438 is disordered; that stretch reads RGHPRKKLFP…KEPSDKSVDS (84 aa). Low complexity-rich tracts occupy residues 374–390 and 404–413; these read SLLSSSSQDAISIASSM and TVTPQTTPTT. S422 is subject to Phosphoserine. Residues 425 to 438 are compositionally biased toward basic and acidic residues; sequence IGEKKEPSDKSVDS.

It belongs to the TMEM184 family. As to expression, widely expressed with higher expression in lung, kidney, spleen, pancreas, thymus, prostate, testis, ovary, small intestine and thyroid.

The protein resides in the membrane. Functionally, possible tumor suppressor which may play a role in cell growth. The protein is Transmembrane protein 184C (TMEM184C) of Homo sapiens (Human).